The primary structure comprises 101 residues: Small ribosomal subunit protein bS18c (101 aa).

This sequence belongs to the bacterial ribosomal protein bS18 family. In terms of assembly, part of the 30S ribosomal subunit.

The protein localises to the plastid. Its subcellular location is the chloroplast. The protein is Small ribosomal subunit protein bS18c of Morus indica (Mulberry).